Consider the following 350-residue polypeptide: Sterol-4-alpha-carboxylate 3-dehydrogenase ERG26, decarboxylating (350 aa).

NADP(+) contacts are provided by residues 12 to 18, 63 to 64, and 85 to 87; these read GGSGFLG, DL, and SAS. 2 residues coordinate substrate: S125 and Y152. Residues Y152, K156, and 179-182 contribute to the NADP(+) site; that span reads PAGI. K156 acts as the Proton donor in catalysis.

Belongs to the 3-beta-HSD family. In terms of assembly, heterotetramer of ERG25, ERG26, ERG27 and ERG28. ERG28 acts as a scaffold to tether ERG27 and other 4,4-demethylation-related enzymes, forming a demethylation enzyme complex, in the endoplasmic reticulum.

Its subcellular location is the endoplasmic reticulum membrane. It carries out the reaction 4beta-methylzymosterol-4alpha-carboxylate + NADP(+) = 3-dehydro-4-methylzymosterol + CO2 + NADPH. Its pathway is steroid biosynthesis; zymosterol biosynthesis; zymosterol from lanosterol: step 4/6. Functionally, sterol-4-alpha-carboxylate 3-dehydrogenase; part of the third module of ergosterol biosynthesis pathway that includes the late steps of the pathway. ERG26 is a catalytic component of the C-4 demethylation complex that catalyzes the oxidative decarboxylation that results in a reduction of the 3-beta-hydroxy group at the C-3 carbon to an oxo group. The third module or late pathway involves the ergosterol synthesis itself through consecutive reactions that mainly occur in the endoplasmic reticulum (ER) membrane. Firstly, the squalene synthase ERG9 catalyzes the condensation of 2 farnesyl pyrophosphate moieties to form squalene, which is the precursor of all steroids. Squalene synthase is crucial for balancing the incorporation of farnesyl diphosphate (FPP) into sterol and nonsterol isoprene synthesis. Secondly, the squalene epoxidase ERG1 catalyzes the stereospecific oxidation of squalene to (S)-2,3-epoxysqualene, which is considered to be a rate-limiting enzyme in steroid biosynthesis. Then, the lanosterol synthase ERG7 catalyzes the cyclization of (S)-2,3 oxidosqualene to lanosterol, a reaction that forms the sterol core. In the next steps, lanosterol is transformed to zymosterol through a complex process involving various demethylation, reduction and desaturation reactions. The lanosterol 14-alpha-demethylase ERG11 (also known as CYP51) catalyzes C14-demethylation of lanosterol to produce 4,4'-dimethyl cholesta-8,14,24-triene-3-beta-ol, which is critical for ergosterol biosynthesis. The C-14 reductase ERG24 reduces the C14=C15 double bond of 4,4-dimethyl-cholesta-8,14,24-trienol to produce 4,4-dimethyl-cholesta-8,24-dienol. 4,4-dimethyl-cholesta-8,24-dienol is substrate of the C-4 demethylation complex ERG25-ERG26-ERG27 in which ERG25 catalyzes the three-step monooxygenation required for the demethylation of 4,4-dimethyl and 4alpha-methylsterols, ERG26 catalyzes the oxidative decarboxylation that results in a reduction of the 3-beta-hydroxy group at the C-3 carbon to an oxo group, and ERG27 is responsible for the reduction of the keto group on the C-3. ERG28 has a role as a scaffold to help anchor ERG25, ERG26 and ERG27 to the endoplasmic reticulum and ERG29 regulates the activity of the iron-containing C4-methylsterol oxidase ERG25. Then, the sterol 24-C-methyltransferase ERG6 catalyzes the methyl transfer from S-adenosyl-methionine to the C-24 of zymosterol to form fecosterol. The C-8 sterol isomerase ERG2 catalyzes the reaction which results in unsaturation at C-7 in the B ring of sterols and thus converts fecosterol to episterol. The sterol-C5-desaturase ERG3 then catalyzes the introduction of a C-5 double bond in the B ring to produce 5-dehydroepisterol. The C-22 sterol desaturase ERG5 further converts 5-dehydroepisterol into ergosta-5,7,22,24(28)-tetraen-3beta-ol by forming the C-22(23) double bond in the sterol side chain. Finally, ergosta-5,7,22,24(28)-tetraen-3beta-ol is substrate of the C-24(28) sterol reductase ERG4 to produce ergosterol. The protein is Sterol-4-alpha-carboxylate 3-dehydrogenase ERG26, decarboxylating of Candida albicans (strain SC5314 / ATCC MYA-2876) (Yeast).